The following is a 217-amino-acid chain: ATP phosphoribosyltransferase (217 aa).

This sequence belongs to the ATP phosphoribosyltransferase family. Short subfamily. As to quaternary structure, heteromultimer composed of HisG and HisZ subunits.

The protein localises to the cytoplasm. It catalyses the reaction 1-(5-phospho-beta-D-ribosyl)-ATP + diphosphate = 5-phospho-alpha-D-ribose 1-diphosphate + ATP. The protein operates within amino-acid biosynthesis; L-histidine biosynthesis; L-histidine from 5-phospho-alpha-D-ribose 1-diphosphate: step 1/9. Its function is as follows. Catalyzes the condensation of ATP and 5-phosphoribose 1-diphosphate to form N'-(5'-phosphoribosyl)-ATP (PR-ATP). Has a crucial role in the pathway because the rate of histidine biosynthesis seems to be controlled primarily by regulation of HisG enzymatic activity. The protein is ATP phosphoribosyltransferase of Burkholderia orbicola (strain MC0-3).